The sequence spans 284 residues: Protease HtpX homolog (284 aa).

The next 2 membrane-spanning stretches (helical) occupy residues 7–26 and 33–47; these read TYLLMALLVGLIYAICMMLH and IILALIPNVIAYYMS. Zn(2+) is bound at residue histidine 129. Glutamate 130 is an active-site residue. Histidine 133 is a Zn(2+) binding site. A run of 2 helical transmembrane segments spans residues 148-168 and 180-200; these read LAGAIVMIAEWMLYWGGIFFV and IGTILLLILAPIAATIIQFAI. Glutamate 205 contributes to the Zn(2+) binding site.

The protein belongs to the peptidase M48B family. Requires Zn(2+) as cofactor.

It is found in the cell membrane. This Methanocaldococcus jannaschii (strain ATCC 43067 / DSM 2661 / JAL-1 / JCM 10045 / NBRC 100440) (Methanococcus jannaschii) protein is Protease HtpX homolog.